The sequence spans 891 residues: Protein kinase kin1 (891 aa).

Residues glycine 65–arginine 116 are disordered. Residues tyrosine 125–methionine 395 form the Protein kinase domain. Residues isoleucine 131–valine 139 and lysine 154 contribute to the ATP site. The Proton acceptor role is filled by aspartate 266. Threonine 528 is modified (phosphothreonine). 3 disordered regions span residues threonine 528–arginine 699, threonine 728–leucine 747, and threonine 805–asparagine 841. Composition is skewed to low complexity over residues proline 529–valine 538 and histidine 583–arginine 603. Phosphoserine is present on residues serine 535 and serine 536. Composition is skewed to polar residues over residues lysine 612–serine 629, leucine 649–threonine 659, isoleucine 669–arginine 699, threonine 728–lysine 742, and tyrosine 820–tyrosine 829. A KA1 domain is found at glycine 842 to leucine 891.

Belongs to the protein kinase superfamily. Ser/Thr protein kinase family.

Its subcellular location is the cytoplasm. It catalyses the reaction L-seryl-[protein] + ATP = O-phospho-L-seryl-[protein] + ADP + H(+). The enzyme catalyses L-threonyl-[protein] + ATP = O-phospho-L-threonyl-[protein] + ADP + H(+). Functionally, has a role in establishing the characteristic rod cell shape. Important for cell polarity and is involved in directing growth to the cell ends. This Schizosaccharomyces pombe (strain 972 / ATCC 24843) (Fission yeast) protein is Protein kinase kin1 (kin1).